Consider the following 997-residue polypeptide: Disease resistance protein RML1A (997 aa).

Residues 12-176 (WRYRVFTSFH…KIARDVSEKL (165 aa)) form the TIR domain. Glu87 is a catalytic residue. Positions 191-447 (EAHLRKIQSL…HIAIFFNYED (257 aa)) constitute an NB-ARC domain. 10 LRR repeats span residues 194-218 (LRKI…GPAG), 534-557 (TSGI…RFLS), 600-623 (AENL…TQLL), 624-647 (TKLK…SNAT), 649-670 (LEML…IKNL), 671-693 (HKLD…NINL), 694-714 (ASLE…PAFS), 715-737 (TKIK…ITHC), 758-781 (PSSL…CIKD), and 783-808 (QRLD…SLRL).

It carries out the reaction NAD(+) + H2O = ADP-D-ribose + nicotinamide + H(+). Its function is as follows. TIR-NB-LRR receptor-like protein that confers resistance to the pathogen Leptosphaeria maculans (blackleg disease). This chain is Disease resistance protein RML1A, found in Arabidopsis thaliana (Mouse-ear cress).